Consider the following 190-residue polypeptide: Ganglioside GM2 activator (190 aa).

The N-terminal stretch at 1–23 (MQSLMQAPVLIALGLLFAAPAQA) is a signal peptide. Intrachain disulfides connect C36–C180, C96–C103, C109–C135, and C122–C133. N60 carries N-linked (GlcNAc...) asparagine glycosylation.

The protein resides in the lysosome. The enzyme catalyses cholesterol(in) = cholesterol(out). Functionally, the large binding pocket can accommodate several single chain phospholipids and fatty acids, GM2A also exhibits some calcium-independent phospholipase activity. Binds gangliosides and stimulates ganglioside GM2 degradation. It stimulates only the breakdown of ganglioside GM2 and glycolipid GA2 by beta-hexosaminidase A. It extracts single GM2 molecules from membranes and presents them in soluble form to beta-hexosaminidase A for cleavage of N-acetyl-D-galactosamine and conversion to GM3. Has cholesterol transfer activity. This chain is Ganglioside GM2 activator (GM2A), found in Macaca fascicularis (Crab-eating macaque).